An 856-amino-acid chain; its full sequence is Centrosomal protein of 97 kDa (856 aa).

LRR repeat units lie at residues Asp-37–Lys-58, Gln-59–Thr-80, Gln-81–Val-102, His-103–Thr-124, Ala-125–Ile-146, Ser-147–Leu-168, Asn-171–Ala-192, and Glu-196–Asn-205. Residues Thr-211–Leu-249 form the LRRCT domain. Residues His-300–Ala-742 form a CCP110-binding region. 2 positions are modified to phosphoserine: Ser-308 and Ser-410. The disordered stretch occupies residues Asp-430–Lys-451. Phosphoserine is present on Ser-497. Positions Leu-498–Glu-513 are enriched in polar residues. The tract at residues Leu-498–Ser-525 is disordered. Ser-521 carries the phosphoserine modification. The residue at position 534 (Thr-534) is a Phosphothreonine. The 30-residue stretch at Leu-550–Glu-579 folds into the IQ domain. The interaction with MPHOSPH9 stretch occupies residues Glu-579 to Val-853. 2 disordered regions span residues Pro-646 to Ser-672 and Asp-737 to Cys-840. The span at Asp-737–Arg-752 shows a compositional bias: basic and acidic residues. Positions Glu-753–Gln-773 are enriched in polar residues. Phosphoserine is present on Ser-755. Positions Asp-776–Ala-787 are enriched in acidic residues. The segment covering Glu-799–Arg-811 has biased composition (basic and acidic residues). Over residues Val-812–Ala-833 the composition is skewed to polar residues.

In terms of assembly, interacts with CALM1, CEP76, KIF24 and TALPID3. Interacts with CCP110. ENKD1 competes with CEP97 for binding to CCP110, destabilizing the interaction between CP110 and CEP97 which promotes the removal of CCP110 and CEP97 from the mother centriole and allows the initiation of ciliogenesis. Via its interaction with CCP110, may indirectly interact with HERC2 and NEURL4. Interacts with MPHOSPH9.

The protein resides in the cytoplasm. It is found in the cytoskeleton. Its subcellular location is the microtubule organizing center. The protein localises to the centrosome. It localises to the centriole. In terms of biological role, acts as a key negative regulator of ciliogenesis in collaboration with CCP110 by capping the mother centriole thereby preventing cilia formation. Required for recruitment of CCP110 to the centrosome. This Mus musculus (Mouse) protein is Centrosomal protein of 97 kDa (Cep97).